The primary structure comprises 135 residues: Large ribosomal subunit protein eL32 (135 aa).

It belongs to the eukaryotic ribosomal protein eL32 family.

This is Large ribosomal subunit protein eL32 (rpl32e) from Methanococcus vannielii.